The chain runs to 144 residues: Large ribosomal subunit protein uL11 (144 aa).

This sequence belongs to the universal ribosomal protein uL11 family. As to quaternary structure, part of the ribosomal stalk of the 50S ribosomal subunit. Interacts with L10 and the large rRNA to form the base of the stalk. L10 forms an elongated spine to which L12 dimers bind in a sequential fashion forming a multimeric L10(L12)X complex. Post-translationally, one or more lysine residues are methylated.

Functionally, forms part of the ribosomal stalk which helps the ribosome interact with GTP-bound translation factors. This chain is Large ribosomal subunit protein uL11, found in Nocardia farcinica (strain IFM 10152).